Consider the following 439-residue polypeptide: Ribosomal protein uS12 methylthiotransferase RimO (439 aa).

The MTTase N-terminal domain occupies 7 to 119; sequence KQLCLISLGC…IDILIAKKQN (113 aa). 6 residues coordinate [4Fe-4S] cluster: Cys-16, Cys-50, Cys-82, Cys-151, Cys-155, and Cys-158. One can recognise a Radical SAM core domain in the interval 137–368; sequence TGSSVHAYVK…ALKHQNHSFK (232 aa).

It belongs to the methylthiotransferase family. RimO subfamily. [4Fe-4S] cluster serves as cofactor.

The protein resides in the cytoplasm. The enzyme catalyses L-aspartate(89)-[ribosomal protein uS12]-hydrogen + (sulfur carrier)-SH + AH2 + 2 S-adenosyl-L-methionine = 3-methylsulfanyl-L-aspartate(89)-[ribosomal protein uS12]-hydrogen + (sulfur carrier)-H + 5'-deoxyadenosine + L-methionine + A + S-adenosyl-L-homocysteine + 2 H(+). Its function is as follows. Catalyzes the methylthiolation of an aspartic acid residue of ribosomal protein uS12. This Helicobacter pylori (strain HPAG1) protein is Ribosomal protein uS12 methylthiotransferase RimO.